Consider the following 115-residue polypeptide: Fluoride-specific ion channel FluC 4 (115 aa).

2 helical membrane-spanning segments follow: residues 19–39 (WGTF…AGLG) and 42–62 (LGGI…LLGG). Na(+)-binding residues include glycine 61 and threonine 64. Residues 89-109 (IVASALLCVLAVAAGYGGIMW) form a helical membrane-spanning segment.

Belongs to the fluoride channel Fluc/FEX (TC 1.A.43) family.

It is found in the cell inner membrane. The catalysed reaction is fluoride(in) = fluoride(out). With respect to regulation, na(+) is not transported, but it plays an essential structural role and its presence is essential for fluoride channel function. In terms of biological role, fluoride-specific ion channel. Important for reducing fluoride concentration in the cell, thus reducing its toxicity. The protein is Fluoride-specific ion channel FluC 4 of Brucella melitensis biotype 1 (strain ATCC 23456 / CCUG 17765 / NCTC 10094 / 16M).